A 284-amino-acid polypeptide reads, in one-letter code: Small ribosomal subunit protein uS5z (284 aa).

Residues 1-19 (MAERGGEGGAERGGDRGDF) are compositionally biased toward basic and acidic residues. Residues 1 to 51 (MAERGGEGGAERGGDRGDFGRGFGGGRGGGRGRDRGPRGRGRRGGRASEET) are disordered. Residues 20-29 (GRGFGGGRGG) show a composition bias toward gly residues. In terms of domain architecture, S5 DRBM spans 95–158 (LKDEVMKIMP…ILAKLSVVPV (64 aa)).

Belongs to the universal ribosomal protein uS5 family.

The polypeptide is Small ribosomal subunit protein uS5z (RPS2A) (Arabidopsis thaliana (Mouse-ear cress)).